The chain runs to 1222 residues: ATP-dependent helicase/nuclease subunit A (1222 aa).

The 457-residue stretch at glutamine 39–glutamine 495 folds into the UvrD-like helicase ATP-binding domain. Alanine 60–threonine 67 is an ATP binding site. Positions glutamine 524–glycine 810 constitute a UvrD-like helicase C-terminal domain.

It belongs to the helicase family. AddA subfamily. Heterodimer of AddA and AddB/RexB. Mg(2+) is required as a cofactor.

The catalysed reaction is Couples ATP hydrolysis with the unwinding of duplex DNA by translocating in the 3'-5' direction.. It carries out the reaction ATP + H2O = ADP + phosphate + H(+). The heterodimer acts as both an ATP-dependent DNA helicase and an ATP-dependent, dual-direction single-stranded exonuclease. Recognizes the chi site generating a DNA molecule suitable for the initiation of homologous recombination. The AddA nuclease domain is required for chi fragment generation; this subunit has the helicase and 3' -&gt; 5' nuclease activities. The sequence is that of ATP-dependent helicase/nuclease subunit A from Streptococcus pyogenes serotype M49 (strain NZ131).